The following is a 224-amino-acid chain: 7-cyano-7-deazaguanine synthase (224 aa).

12–22 (LSGGLDSSTVT) provides a ligand contact to ATP. Residues Cys193, Cys201, Cys204, and Cys207 each coordinate Zn(2+).

It belongs to the QueC family. Zn(2+) serves as cofactor.

The catalysed reaction is 7-carboxy-7-deazaguanine + NH4(+) + ATP = 7-cyano-7-deazaguanine + ADP + phosphate + H2O + H(+). Its pathway is purine metabolism; 7-cyano-7-deazaguanine biosynthesis. Catalyzes the ATP-dependent conversion of 7-carboxy-7-deazaguanine (CDG) to 7-cyano-7-deazaguanine (preQ(0)). This is 7-cyano-7-deazaguanine synthase from Prochlorococcus marinus (strain MIT 9301).